The primary structure comprises 177 residues: Peptidyl-tRNA hydrolase (177 aa).

TRNA is bound at residue tyrosine 18. Residue histidine 23 is the Proton acceptor of the active site. Residues phenylalanine 65, asparagine 67, and asparagine 113 each contribute to the tRNA site.

It belongs to the PTH family. In terms of assembly, monomer.

The protein localises to the cytoplasm. The enzyme catalyses an N-acyl-L-alpha-aminoacyl-tRNA + H2O = an N-acyl-L-amino acid + a tRNA + H(+). Its function is as follows. Hydrolyzes ribosome-free peptidyl-tRNAs (with 1 or more amino acids incorporated), which drop off the ribosome during protein synthesis, or as a result of ribosome stalling. Functionally, catalyzes the release of premature peptidyl moieties from peptidyl-tRNA molecules trapped in stalled 50S ribosomal subunits, and thus maintains levels of free tRNAs and 50S ribosomes. This chain is Peptidyl-tRNA hydrolase, found in Corynebacterium efficiens (strain DSM 44549 / YS-314 / AJ 12310 / JCM 11189 / NBRC 100395).